A 227-amino-acid chain; its full sequence is Cytochrome c oxidase subunit 2 (227 aa).

Residues 1–14 (MAHPVQLGFQDAAS) are Mitochondrial intermembrane-facing. A helical transmembrane segment spans residues 15 to 45 (PIMEELLYFHDHTLMIMFLISSLVLYIISLM). Residues 46–59 (LTTKLTHTSTMDAQ) lie on the Mitochondrial matrix side of the membrane. The chain crosses the membrane as a helical span at residues 60 to 87 (EVETVWTILPAAILILIALPSLRILYMM). The Mitochondrial intermembrane portion of the chain corresponds to 88–227 (DEITSPSLTL…HFEEWLLFTL (140 aa)). The Cu cation site is built by H161, C196, E198, C200, H204, and M207. E198 contributes to the Mg(2+) binding site.

The protein belongs to the cytochrome c oxidase subunit 2 family. In terms of assembly, component of the cytochrome c oxidase (complex IV, CIV), a multisubunit enzyme composed of 14 subunits. The complex is composed of a catalytic core of 3 subunits MT-CO1, MT-CO2 and MT-CO3, encoded in the mitochondrial DNA, and 11 supernumerary subunits COX4I, COX5A, COX5B, COX6A, COX6B, COX6C, COX7A, COX7B, COX7C, COX8 and NDUFA4, which are encoded in the nuclear genome. The complex exists as a monomer or a dimer and forms supercomplexes (SCs) in the inner mitochondrial membrane with NADH-ubiquinone oxidoreductase (complex I, CI) and ubiquinol-cytochrome c oxidoreductase (cytochrome b-c1 complex, complex III, CIII), resulting in different assemblies (supercomplex SCI(1)III(2)IV(1) and megacomplex MCI(2)III(2)IV(2)). Found in a complex with TMEM177, COA6, COX18, COX20, SCO1 and SCO2. Interacts with TMEM177 in a COX20-dependent manner. Interacts with COX20. Interacts with COX16. Requires Cu cation as cofactor.

The protein resides in the mitochondrion inner membrane. The enzyme catalyses 4 Fe(II)-[cytochrome c] + O2 + 8 H(+)(in) = 4 Fe(III)-[cytochrome c] + 2 H2O + 4 H(+)(out). Its function is as follows. Component of the cytochrome c oxidase, the last enzyme in the mitochondrial electron transport chain which drives oxidative phosphorylation. The respiratory chain contains 3 multisubunit complexes succinate dehydrogenase (complex II, CII), ubiquinol-cytochrome c oxidoreductase (cytochrome b-c1 complex, complex III, CIII) and cytochrome c oxidase (complex IV, CIV), that cooperate to transfer electrons derived from NADH and succinate to molecular oxygen, creating an electrochemical gradient over the inner membrane that drives transmembrane transport and the ATP synthase. Cytochrome c oxidase is the component of the respiratory chain that catalyzes the reduction of oxygen to water. Electrons originating from reduced cytochrome c in the intermembrane space (IMS) are transferred via the dinuclear copper A center (CU(A)) of subunit 2 and heme A of subunit 1 to the active site in subunit 1, a binuclear center (BNC) formed by heme A3 and copper B (CU(B)). The BNC reduces molecular oxygen to 2 water molecules using 4 electrons from cytochrome c in the IMS and 4 protons from the mitochondrial matrix. This is Cytochrome c oxidase subunit 2 (MT-CO2) from Varecia variegata (Black-and-white ruffed lemur).